The chain runs to 797 residues: Hid-1 family protein P27G11.12 (797 aa).

It belongs to the hid-1 family.

The protein resides in the cytoplasm. It localises to the nucleus. This chain is Hid-1 family protein P27G11.12, found in Schizosaccharomyces pombe (strain 972 / ATCC 24843) (Fission yeast).